Reading from the N-terminus, the 209-residue chain is Small ribosomal subunit protein uS3c (209 aa).

Positions 39–109 (IRSCIEKQLH…QIRINLIEIT (71 aa)) constitute a KH type-2 domain.

Belongs to the universal ribosomal protein uS3 family. Part of the 30S ribosomal subunit.

It localises to the plastid. Its subcellular location is the chloroplast. This Gracilaria tenuistipitata (Red alga) protein is Small ribosomal subunit protein uS3c (rps3).